We begin with the raw amino-acid sequence, 606 residues long: Envelope glycoprotein gp95 (606 aa).

The first 62 residues, 1-62 (MEAVIKAFLT…VLCEVTGVRA (62 aa)), serve as a signal peptide directing secretion. At 63-552 (DVHLLEQPGN…EWAVHLLKGL (490 aa)) the chain is on the extracellular side. Asn-79, Asn-120, Asn-141, Asn-158, and Asn-178 each carry an N-linked (GlcNAc...) asparagine; by host glycan. Cystine bridges form between Cys-87–Cys-499, Cys-121–Cys-152, Cys-192–Cys-245, Cys-258–Cys-267, Cys-353–Cys-370, Cys-410–Cys-446, and Cys-491–Cys-498. Positions 185-226 (ISGITGGCVGFRPQGVPWYLGWSRQEATRFLLRHPSFSKSTE) are binding to host receptor. Asn-257 carries N-linked (GlcNAc...) asparagine; by host glycosylation. The tract at residues 261 to 288 (VGRQYRCGNARSPRPGLPEIQCTRRGGK) is binding to host receptor. N-linked (GlcNAc...) asparagine; by host glycosylation is found at Asn-291, Asn-297, Asn-307, and Asn-315. N-linked (GlcNAc...) asparagine; by host glycosylation is present at Asn-391. Positions 418-438 (GPTARIFASILAPGVARAQAL) are fusion peptide. Positions 435–485 (AQALREIERLACWSVKQANLTTSFLGDLLDDVTSIRHAVLQNRAAIDFLLL) form a coiled coil. An N-linked (GlcNAc...) asparagine; by host glycan is attached at Asn-453. The segment at 474–490 (LQNRAAIDFLLLAHGHG) is immunosuppression. Asn-501 is a glycosylation site (N-linked (GlcNAc...) asparagine; by host). Positions 503–533 (SDHSESIQKKFQLMKEHVNKIGVDSDPIGSW) form a coiled coil. The chain crosses the membrane as a helical span at residues 553–573 (LLGLVVILLLVVCLPCLLQIV). 2 S-palmitoyl cysteine; by host lipidation sites follow: Cys-565 and Cys-568. At 574–606 (CGNIRKMINNSISYHTEYKKLQKACGQPESRIV) the chain is on the cytoplasmic side.

Belongs to the Alpharetroviruses envelope glycoprotein family. In terms of assembly, heterodimer with the transmembrane protein. The mature envelope protein (Env) consists of a trimer of SU-TM heterodimers attached by a labile interchain disulfide bond. Interacts with the host cell entry receptor TVA isoforms pg900 and pg800; this interaction allows the viral attachment. As to quaternary structure, heterodimer with the surface protein. The mature envelope protein (Env) consists of a trimer of SU-TM heterodimers attached by a labile interchain disulfide bond. Post-translationally, specific enzymatic cleavages in vivo yield mature proteins. Envelope glycoproteins are synthesized as an inactive precursor that is N-glycosylated and processed likely by host cell furin or by a furin-like protease in the Golgi to yield the mature SU and TM proteins. The cleavage site between SU and TM requires the minimal sequence [KR]-X-[KR]-R. In terms of processing, the transmembrane protein is palmitoylated. Palmitoylation is necessary for glycoprotein function and infectivity.

It localises to the virion membrane. It is found in the host cell membrane. Functionally, the surface protein (SU) attaches the virus to the host cell entry receptor TVA. This interaction triggers the refolding of the transmembrane protein (TM) thereby unmasking its fusion peptide and the formation of a reactive thiolate on Cys-100 to activate its fusogenic potential. Fusion occurs at the host cell plasma membrane. Its function is as follows. The transmembrane protein (TM) acts as a class I viral fusion protein. Under the current model, the protein has at least 3 conformational states: pre-fusion native state, pre-hairpin intermediate state, and post-fusion hairpin state. During viral and target cell membrane fusion, the coiled coil regions (heptad repeats) assume a trimer-of-hairpins structure, positioning the fusion peptide in close proximity to the C-terminal region of the ectodomain. The formation of this structure appears to drive apposition and subsequent fusion of viral and target cell membranes. Membranes fusion leads to delivery of the nucleocapsid into the cytoplasm. In Avian leukosis virus subgroup A (isolate RSA) (ALV-A RSA), this protein is Envelope glycoprotein gp95 (env).